The following is a 478-amino-acid chain: Zinc finger C3HC-type protein 1-like (478 aa).

A C3HC-type zinc finger spans residues 93–147 (CAKYGWSNIECDMLKCSSCNAYLCASLQPVLDFSKYKQRCVELQEALRKAHEKFC). The disordered stretch occupies residues 285 to 389 (LSAPNTPVSP…SSSSDTSPRG (105 aa)). Residues 351–363 (SMGQGESSGLSNE) show a composition bias toward polar residues. Low complexity predominate over residues 377–388 (LCSSSSSDTSPR).

Phosphorylated. May also be weakly phosphorylated on Tyr residues.

The protein resides in the nucleus. Its subcellular location is the nucleus envelope. Functionally, required for proper positioning of a substantial amount of TPR at the nuclear basket (NB) through interaction with TPR. The protein is Zinc finger C3HC-type protein 1-like (zc3hc1) of Xenopus tropicalis (Western clawed frog).